The chain runs to 399 residues: Nicotinate phosphoribosyltransferase (399 aa).

The residue at position 224 (histidine 224) is a Phosphohistidine; by autocatalysis.

The protein belongs to the NAPRTase family. Post-translationally, transiently phosphorylated on a His residue during the reaction cycle. Phosphorylation strongly increases the affinity for substrates and increases the rate of nicotinate D-ribonucleotide production. Dephosphorylation regenerates the low-affinity form of the enzyme, leading to product release.

The enzyme catalyses nicotinate + 5-phospho-alpha-D-ribose 1-diphosphate + ATP + H2O = nicotinate beta-D-ribonucleotide + ADP + phosphate + diphosphate. Its pathway is cofactor biosynthesis; NAD(+) biosynthesis; nicotinate D-ribonucleotide from nicotinate: step 1/1. Catalyzes the synthesis of beta-nicotinate D-ribonucleotide from nicotinate and 5-phospho-D-ribose 1-phosphate at the expense of ATP. The chain is Nicotinate phosphoribosyltransferase from Ectopseudomonas mendocina (strain ymp) (Pseudomonas mendocina).